Consider the following 201-residue polypeptide: Ras-related protein Rab-1B (201 aa).

Methionine 1 carries the post-translational modification N-acetylmethionine. Serine 17, glycine 18, valine 19, glycine 20, lysine 21, serine 22, cysteine 23, tyrosine 33, threonine 34, glutamate 35, serine 36, serine 39, and threonine 40 together coordinate GTP. Serine 22 provides a ligand contact to Mg(2+). Positions 30–45 (DDTYTESYISTIGVDF) match the Switch 1 motif. The Mg(2+) site is built by threonine 40 and aspartate 63. Residues 64-83 (TAGQERFRTITSSYYRGAHG) form a switch 2 region; required for interaction with REP1/CHM region. The Switch 2 signature appears at 65-80 (AGQERFRTITSSYYRG). Residues glycine 66, asparagine 121, lysine 122, aspartate 124, serine 151, alanine 152, and lysine 153 each contribute to the GTP site. Positions 174-201 (GPGAASGGERPNLKIDSTPVKPAGGGCC) are disordered. 2 S-geranylgeranyl cysteine lipidation sites follow: cysteine 200 and cysteine 201. Cysteine 201 carries the cysteine methyl ester modification.

This sequence belongs to the small GTPase superfamily. Rab family. As to quaternary structure, interacts with MICAL1 and MICAL2. Interacts (in GTP-bound form) with MICALCL, MICAL1 and MILCAL3. Interacts with GDI1; the interaction requires the GDP-bound state. Interacts with CHM/REP1; the interaction requires the GDP-bound form and is necessary for prenylation by GGTase II. Interacts with RabGAP TBC1D20. Interacts (in GDP-bound form) with lipid phosphatase MTMR6 (via GRAM domain); the interaction regulates MTMR6 recruitment to the endoplasmic reticulum-Golgi intermediate compartment. Interacts (in GDP-bound form) with lipid phosphatase MTMR7. Mg(2+) is required as a cofactor. Prenylated; by GGTase II, only after interaction of the substrate with Rab escort protein 1 (REP1).

The protein resides in the cytoplasm. Its subcellular location is the membrane. The protein localises to the preautophagosomal structure membrane. It localises to the perinuclear region. The catalysed reaction is GTP + H2O = GDP + phosphate + H(+). With respect to regulation, regulated by guanine nucleotide exchange factors (GEFs) which promote the exchange of bound GDP for free GTP. Regulated by GTPase activating proteins (GAPs) including TBC1D20 which increases the GTP hydrolysis activity. Inhibited by GDP dissociation inhibitors (GDIs). Its function is as follows. The small GTPases Rab are key regulators of intracellular membrane trafficking, from the formation of transport vesicles to their fusion with membranes. Rabs cycle between an inactive GDP-bound form and an active GTP-bound form that is able to recruit to membranes different set of downstream effectors directly responsible for vesicle formation, movement, tethering and fusion. Plays a role in the initial events of the autophagic vacuole development which take place at specialized regions of the endoplasmic reticulum. Regulates vesicular transport between the endoplasmic reticulum and successive Golgi compartments. Required to modulate the compacted morphology of the Golgi. Promotes the recruitment of lipid phosphatase MTMR6 to the endoplasmic reticulum-Golgi intermediate compartment. The polypeptide is Ras-related protein Rab-1B (RAB1B) (Macaca fascicularis (Crab-eating macaque)).